A 508-amino-acid polypeptide reads, in one-letter code: Photosystem II CP47 reaction center protein (508 aa).

6 helical membrane-spanning segments follow: residues 21-36 (SVHL…WAGS), 101-115 (IVLS…IWHW), 140-156 (GIHL…FGAF), 203-218 (IAAG…FHLT), 237-252 (VLSS…AFVV), and 457-472 (CFAL…HGAR).

The protein belongs to the PsbB/PsbC family. PsbB subfamily. PSII is composed of 1 copy each of membrane proteins PsbA, PsbB, PsbC, PsbD, PsbE, PsbF, PsbH, PsbI, PsbJ, PsbK, PsbL, PsbM, PsbT, PsbX, PsbY, PsbZ, Psb30/Ycf12, at least 3 peripheral proteins of the oxygen-evolving complex and a large number of cofactors. It forms dimeric complexes. The cofactor is Binds multiple chlorophylls. PSII binds additional chlorophylls, carotenoids and specific lipids..

It is found in the plastid. Its subcellular location is the chloroplast thylakoid membrane. One of the components of the core complex of photosystem II (PSII). It binds chlorophyll and helps catalyze the primary light-induced photochemical processes of PSII. PSII is a light-driven water:plastoquinone oxidoreductase, using light energy to abstract electrons from H(2)O, generating O(2) and a proton gradient subsequently used for ATP formation. The polypeptide is Photosystem II CP47 reaction center protein (Chlorokybus atmophyticus (Soil alga)).